Reading from the N-terminus, the 355-residue chain is UDP-N-acetylglucosamine--N-acetylmuramyl-(pentapeptide) pyrophosphoryl-undecaprenol N-acetylglucosamine transferase (355 aa).

Residues 15 to 17 (TGG), Asn127, Arg163, Ser191, Ile245, 264 to 269 (ALTVSE), and Gln289 each bind UDP-N-acetyl-alpha-D-glucosamine.

The protein belongs to the glycosyltransferase 28 family. MurG subfamily.

The protein localises to the cell inner membrane. The catalysed reaction is di-trans,octa-cis-undecaprenyl diphospho-N-acetyl-alpha-D-muramoyl-L-alanyl-D-glutamyl-meso-2,6-diaminopimeloyl-D-alanyl-D-alanine + UDP-N-acetyl-alpha-D-glucosamine = di-trans,octa-cis-undecaprenyl diphospho-[N-acetyl-alpha-D-glucosaminyl-(1-&gt;4)]-N-acetyl-alpha-D-muramoyl-L-alanyl-D-glutamyl-meso-2,6-diaminopimeloyl-D-alanyl-D-alanine + UDP + H(+). The protein operates within cell wall biogenesis; peptidoglycan biosynthesis. Its function is as follows. Cell wall formation. Catalyzes the transfer of a GlcNAc subunit on undecaprenyl-pyrophosphoryl-MurNAc-pentapeptide (lipid intermediate I) to form undecaprenyl-pyrophosphoryl-MurNAc-(pentapeptide)GlcNAc (lipid intermediate II). In Yersinia enterocolitica serotype O:8 / biotype 1B (strain NCTC 13174 / 8081), this protein is UDP-N-acetylglucosamine--N-acetylmuramyl-(pentapeptide) pyrophosphoryl-undecaprenol N-acetylglucosamine transferase.